The primary structure comprises 636 residues: Nuclear receptor subfamily 2 group C member 1 (636 aa).

Positions 149-224 (VELCVVCGDK…LGMKQDSVQC (76 aa)) form a DNA-binding region, nuclear receptor. NR C4-type zinc fingers lie at residues 152–172 (CVVC…CEGC) and 188–207 (CRGS…CQYC). Residues 382–623 (ECVGSNSNLT…SIIPYILRME (242 aa)) enclose the NR LBD domain.

The protein belongs to the nuclear hormone receptor family. NR2 subfamily.

The protein resides in the nucleus. Orphan nuclear receptor. Binds the IR7 element in the promoter of its own gene in an autoregulatory negative feedback mechanism. Primarily repressor of a broad range of genes. Binds to hormone response elements (HREs) consisting of two 5'-AGGTCA-3' half site direct repeat consensus sequences. The chain is Nuclear receptor subfamily 2 group C member 1 from Xenopus tropicalis (Western clawed frog).